The following is a 411-amino-acid chain: Replication factor C subunit 2 (411 aa).

The interval 1–36 (MADFFNLKARQQAAAQASSSKTPTSKQESNRLQPWV) is disordered. The segment covering 11-27 (QQAAAQASSSKTPTSKQ) has biased composition (low complexity). ATP-binding positions include Val-36, Arg-40, 73-81 (GPPGTGKTS), Asn-195, and Arg-253.

Belongs to the activator 1 small subunits family. As to quaternary structure, heteropentamer of subunits RFC1, RFC2, RFC3, RFC4 and RFC5 that forms a complex with PCNA in the presence of ATP.

It localises to the nucleus. Its function is as follows. The elongation of primed DNA templates by DNA polymerase delta and epsilon requires the action of the accessory proteins proliferating cell nuclear antigen (PCNA) and activator 1. Subunit 2 binds ATP and single-stranded DNA. This is Replication factor C subunit 2 (RFC2) from Phaeosphaeria nodorum (strain SN15 / ATCC MYA-4574 / FGSC 10173) (Glume blotch fungus).